We begin with the raw amino-acid sequence, 561 residues long: MRLWKSMAWGILLWHSQSGALCPAWPPARAAEEITRLQQQLADWNDIYWKQGVSAVDDSVYDQLSARLVQWQRCVGQDVSSTPVSPPLNGTTMHPVAHTGVRKLADRQAVEQWVRGRSELWVQPKVDGVAVTLVYQNGKLTRAISRGNGLQGEDWTPKIRLIPSIPQTTQGALANAVLQGEIFLQREGHIQQRMGGMNARSKAAGMLMRQDNASALNSLGIFIWAWPDGPANMPERLSQLAKAGFSLTKKYSLAVKDASEVERARQSWLTSALPFVTDGVVIRMAKEPASQYWRPGQGDWLAAWKYPPVAQVAQVSAIQFSVGKSGKITVVASLVPVILDDKRVQRVNIGSVKRWEAWDIAPGDQILVSLAGQGIPRLDEVVWRSRERSKPVPPGSHFNSLTCFYASATCQEQFISRLVWLGSRSALGLDGMGEASWRALHQTHRFEHIFSWLALTSAQIANTPGVAKGKSEQIWRQFYLARRQSFTRWIMAMDIPLTQAALQASGDRSWEQLLMRTEQHWRQLPATGERRAGRVIDWRNNPQINALSRWLAAQHIPGFGS.

Lysine 125 serves as the catalytic N6-AMP-lysine intermediate.

The protein belongs to the NAD-dependent DNA ligase family. LigB subfamily.

It catalyses the reaction NAD(+) + (deoxyribonucleotide)n-3'-hydroxyl + 5'-phospho-(deoxyribonucleotide)m = (deoxyribonucleotide)n+m + AMP + beta-nicotinamide D-nucleotide.. In terms of biological role, catalyzes the formation of phosphodiester linkages between 5'-phosphoryl and 3'-hydroxyl groups in double-stranded DNA using NAD as a coenzyme and as the energy source for the reaction. The protein is DNA ligase B of Salmonella paratyphi A (strain AKU_12601).